The sequence spans 155 residues: Ribosome maturation factor RimP (155 aa).

This sequence belongs to the RimP family.

It is found in the cytoplasm. In terms of biological role, required for maturation of 30S ribosomal subunits. The chain is Ribosome maturation factor RimP from Gemmatimonas aurantiaca (strain DSM 14586 / JCM 11422 / NBRC 100505 / T-27).